Consider the following 285-residue polypeptide: Nucleotide-binding protein Pmen_0867 (285 aa).

8–15 contributes to the ATP binding site; it reads GRSGSGKS. A GTP-binding site is contributed by 60–63; sequence DARN.

The protein belongs to the RapZ-like family.

Functionally, displays ATPase and GTPase activities. The polypeptide is Nucleotide-binding protein Pmen_0867 (Ectopseudomonas mendocina (strain ymp) (Pseudomonas mendocina)).